The primary structure comprises 262 residues: MSDTEEQEYEEEQAEDEEAVEEEEAPEEPEPVAEREEERPKPSRPVVPPLIPPKIPEGERVDFDDIHRKRMEKDLLELQTLIDVHFEQRKKEEEELIALKDRIERRRAERAEQQRFRTEKERERQAKLAEEKMRKEEEEAKKRAEDDAKKKKVLSNMGAHFGGYLVKAEQKRGKRQTGREMKLRILSERKKPLNIDYMGEDQLREKAQELSEWIHQLESEKFDLMEKLKQQKYEINVLYNRISHAQKFRKGAGKGRVGGRWK.

Residues 1–31 (MSDTEEQEYEEEQAEDEEAVEEEEAPEEPEP) are compositionally biased toward acidic residues. Disordered stretches follow at residues 1 to 62 (MSDT…ERVD) and 109 to 153 (ERAE…KKKV). The residue at position 2 (serine 2) is a Phosphoserine; by CK2. The span at 32–41 (VAEREEERPK) shows a compositional bias: basic and acidic residues. Residues 43 to 55 (SRPVVPPLIPPKI) are compositionally biased toward pro residues. The span at 109–149 (ERAEQQRFRTEKERERQAKLAEEKMRKEEEEAKKRAEDDAK) shows a compositional bias: basic and acidic residues.

The protein belongs to the troponin T family. Interacts with TPM3. Expressed in adult soleus muscle.

Troponin T is the tropomyosin-binding subunit of troponin, the thin filament regulatory complex which confers calcium-sensitivity to striated muscle actomyosin ATPase activity. In Mus musculus (Mouse), this protein is Troponin T, slow skeletal muscle (Tnnt1).